A 338-amino-acid polypeptide reads, in one-letter code: Secretory carrier-associated membrane protein 1 (338 aa).

The segment at 1–64 (MSDFDSNPFA…NVPNTQPAIM (64 aa)) is disordered. Serine 2 carries the N-acetylserine modification. Residue serine 2 is modified to Phosphoserine. Over 2–155 (SDFDSNPFAD…QKTVKLMYYL (154 aa)) the chain is Cytoplasmic. At threonine 45 the chain carries Phosphothreonine. The helical transmembrane segment at 156 to 176 (WMFHAVTLFLNIFGCLAWFCV) threads the bilayer. Over 177-181 (DSARA) the chain is Lumenal. A helical membrane pass occupies residues 182–202 (VDFGLSILWFLLFTPCSFVCW). The Cytoplasmic portion of the chain corresponds to 203-218 (YRPLYGAFRSDSSFRF). A helical transmembrane segment spans residues 219-239 (FVFFFVYICQFAVHVLQAAGF). Topologically, residues 240 to 261 (HNWGNCGWISSLTGLNQNIPVG) are lumenal. A helical transmembrane segment spans residues 262-282 (IMMIIIAALFTASAVISLVMF). Over 283-338 (KKVHGLYRTTGASFEKAQQEFATGVMSNKTVQTAAANAASTAASSAAQNAFKGNQI) the chain is Cytoplasmic.

The protein belongs to the SCAMP family. In terms of assembly, interacts with SYNRG and ITSN1. Interacts with SLC9A7. In terms of tissue distribution, widely expressed, with highest expression in brain.

The protein localises to the golgi apparatus. Its subcellular location is the trans-Golgi network membrane. The protein resides in the recycling endosome membrane. Functions in post-Golgi recycling pathways. Acts as a recycling carrier to the cell surface. In Homo sapiens (Human), this protein is Secretory carrier-associated membrane protein 1 (SCAMP1).